A 290-amino-acid polypeptide reads, in one-letter code: Ribosomal protein L11 methyltransferase (290 aa).

The S-adenosyl-L-methionine site is built by Thr-136, Gly-159, Asp-181, and Asn-228.

It belongs to the methyltransferase superfamily. PrmA family.

Its subcellular location is the cytoplasm. The catalysed reaction is L-lysyl-[protein] + 3 S-adenosyl-L-methionine = N(6),N(6),N(6)-trimethyl-L-lysyl-[protein] + 3 S-adenosyl-L-homocysteine + 3 H(+). Its function is as follows. Methylates ribosomal protein L11. The sequence is that of Ribosomal protein L11 methyltransferase from Allorhizobium ampelinum (strain ATCC BAA-846 / DSM 112012 / S4) (Agrobacterium vitis (strain S4)).